The following is a 429-amino-acid chain: Enolase (429 aa).

Glutamine 167 is a (2R)-2-phosphoglycerate binding site. The active-site Proton donor is glutamate 209. Mg(2+) contacts are provided by aspartate 246, glutamate 289, and aspartate 316. Residues lysine 341, arginine 370, serine 371, and lysine 392 each contribute to the (2R)-2-phosphoglycerate site. Lysine 341 serves as the catalytic Proton acceptor.

The protein belongs to the enolase family. Component of the RNA degradosome, a multiprotein complex involved in RNA processing and mRNA degradation. Mg(2+) is required as a cofactor.

The protein localises to the cytoplasm. The protein resides in the secreted. It localises to the cell surface. It carries out the reaction (2R)-2-phosphoglycerate = phosphoenolpyruvate + H2O. Its pathway is carbohydrate degradation; glycolysis; pyruvate from D-glyceraldehyde 3-phosphate: step 4/5. Functionally, catalyzes the reversible conversion of 2-phosphoglycerate (2-PG) into phosphoenolpyruvate (PEP). It is essential for the degradation of carbohydrates via glycolysis. This Ectopseudomonas mendocina (strain ymp) (Pseudomonas mendocina) protein is Enolase.